A 281-amino-acid chain; its full sequence is 2-dehydro-3-deoxyphosphooctonate aldolase (281 aa).

It belongs to the KdsA family.

The protein localises to the cytoplasm. It catalyses the reaction D-arabinose 5-phosphate + phosphoenolpyruvate + H2O = 3-deoxy-alpha-D-manno-2-octulosonate-8-phosphate + phosphate. Its pathway is carbohydrate biosynthesis; 3-deoxy-D-manno-octulosonate biosynthesis; 3-deoxy-D-manno-octulosonate from D-ribulose 5-phosphate: step 2/3. It functions in the pathway bacterial outer membrane biogenesis; lipopolysaccharide biosynthesis. In Acidithiobacillus ferrooxidans (strain ATCC 23270 / DSM 14882 / CIP 104768 / NCIMB 8455) (Ferrobacillus ferrooxidans (strain ATCC 23270)), this protein is 2-dehydro-3-deoxyphosphooctonate aldolase.